Here is a 389-residue protein sequence, read N- to C-terminus: Exodeoxyribonuclease 7 large subunit (389 aa).

Belongs to the XseA family. As to quaternary structure, heterooligomer composed of large and small subunits.

The protein localises to the cytoplasm. It catalyses the reaction Exonucleolytic cleavage in either 5'- to 3'- or 3'- to 5'-direction to yield nucleoside 5'-phosphates.. In terms of biological role, bidirectionally degrades single-stranded DNA into large acid-insoluble oligonucleotides, which are then degraded further into small acid-soluble oligonucleotides. This Pseudothermotoga lettingae (strain ATCC BAA-301 / DSM 14385 / NBRC 107922 / TMO) (Thermotoga lettingae) protein is Exodeoxyribonuclease 7 large subunit.